The following is a 492-amino-acid chain: Beta-Ala-His dipeptidase (492 aa).

Zn(2+) is bound at residue H107. Residue D109 is part of the active site. D140 provides a ligand contact to Zn(2+). The active-site Proton acceptor is the E174. Residue E175 participates in Zn(2+) binding. S194 carries the phosphoserine modification. Zn(2+)-binding residues include D203 and H453.

This sequence belongs to the peptidase M20A family. As to quaternary structure, homodimer. Zn(2+) is required as a cofactor. As to expression, detected exclusively in kidney.

Its subcellular location is the secreted. It catalyses the reaction Preferential hydrolysis of the beta-Ala-|-His dipeptide (carnosine), and also anserine, Xaa-|-His dipeptides and other dipeptides including homocarnosine.. It carries out the reaction carnosine + H2O = beta-alanine + L-histidine. The catalysed reaction is anserine + H2O = N(pros)-methyl-L-histidine + beta-alanine. The enzyme catalyses L-alanyl-L-histidine + H2O = L-histidine + L-alanine. It catalyses the reaction glycyl-L-histidine + H2O = L-histidine + glycine. It carries out the reaction L-homocarnosine + H2O = 4-aminobutanoate + L-histidine. Catalyzes the peptide bond hydrolysis in Xaa-His dipeptides, displaying the highest activity toward carnosine (beta-alanyl-L-histidine) and anserine (beta-alanyl-3-methyl-histidine). The sequence is that of Beta-Ala-His dipeptidase (Cndp1) from Rattus norvegicus (Rat).